The chain runs to 311 residues: Phospho-N-acetylmuramoyl-pentapeptide-transferase (311 aa).

The next 10 helical transmembrane spans lie at 2 to 22, 48 to 68, 74 to 94, 104 to 124, 144 to 164, 168 to 188, 192 to 212, 214 to 234, 237 to 257, and 288 to 308; these read ENNV…IEGF, GTPT…LLNF, SFLI…DDFM, ITAV…VYFI, LGWF…NAVN, GVDG…LIVG, VVYL…WHPA, IFMG…SFAL, LELF…SVII, and KIAF…IIGW.

The protein belongs to the glycosyltransferase 4 family. MraY subfamily. It depends on Mg(2+) as a cofactor.

The protein resides in the cell inner membrane. It carries out the reaction UDP-N-acetyl-alpha-D-muramoyl-L-alanyl-gamma-D-glutamyl-meso-2,6-diaminopimeloyl-D-alanyl-D-alanine + di-trans,octa-cis-undecaprenyl phosphate = di-trans,octa-cis-undecaprenyl diphospho-N-acetyl-alpha-D-muramoyl-L-alanyl-D-glutamyl-meso-2,6-diaminopimeloyl-D-alanyl-D-alanine + UMP. It participates in cell wall biogenesis; peptidoglycan biosynthesis. Its function is as follows. Catalyzes the initial step of the lipid cycle reactions in the biosynthesis of the cell wall peptidoglycan: transfers peptidoglycan precursor phospho-MurNAc-pentapeptide from UDP-MurNAc-pentapeptide onto the lipid carrier undecaprenyl phosphate, yielding undecaprenyl-pyrophosphoryl-MurNAc-pentapeptide, known as lipid I. The sequence is that of Phospho-N-acetylmuramoyl-pentapeptide-transferase from Kosmotoga olearia (strain ATCC BAA-1733 / DSM 21960 / TBF 19.5.1).